Here is a 157-residue protein sequence, read N- to C-terminus: E3 ubiquitin-protein ligase RHA1B (157 aa).

The RING-type; atypical zinc finger occupies 85–129; it reads CTVCLSDFVSDDKIRQLPKCGHVFHHRCLDRWIVDCNKITCPICR.

The catalysed reaction is S-ubiquitinyl-[E2 ubiquitin-conjugating enzyme]-L-cysteine + [acceptor protein]-L-lysine = [E2 ubiquitin-conjugating enzyme]-L-cysteine + N(6)-ubiquitinyl-[acceptor protein]-L-lysine.. It functions in the pathway protein modification; protein ubiquitination. Its function is as follows. Possesses E3 ubiquitin-protein ligase activity when associated with the E2 enzyme UBC8 in vitro. The polypeptide is E3 ubiquitin-protein ligase RHA1B (Arabidopsis thaliana (Mouse-ear cress)).